A 591-amino-acid polypeptide reads, in one-letter code: Serine/threonine-protein kinase PAK 4 (591 aa).

Positions 11-24 (ISAPSNFEHRVHTG) constitute a CRIB domain. Residues 25–320 (FDQHEQKFTG…VVDPGDPRSY (296 aa)) are linker. Serine 41 is modified (phosphoserine). Lysine 78 carries the post-translational modification N6-methyllysine. The segment at 95-301 (TRSNSLRRDS…PQREPQRVSH (207 aa)) is disordered. 2 positions are modified to phosphoserine: serine 104 and serine 148. Basic and acidic residues predominate over residues 149-164 (GDRRRAGPEKRPKSSR). 2 positions are modified to phosphoserine: serine 167 and serine 181. The residue at position 187 (threonine 187) is a Phosphothreonine. Positions 191-202 (AGLASGAKLAAG) are enriched in low complexity. At serine 195 the chain carries Phosphoserine. Residue threonine 207 is modified to Phosphothreonine. The segment covering 242-260 (SSSSSSRPPTRARGAPSPG) has biased composition (low complexity). Serine 258 and serine 267 each carry phosphoserine. The segment covering 271–290 (LAPPACTPAAPAVPGPPGPR) has biased composition (pro residues). Serine 291 carries the post-translational modification Phosphoserine. Positions 292–301 (PQREPQRVSH) are enriched in basic and acidic residues. Positions 298–323 (RVSHEQFRAALQLVVDPGDPRSYLDN) are GEF-interaction domain (GID). The Protein kinase domain maps to 321–572 (LDNFIKIGEG…AAELLKHPFL (252 aa)). ATP-binding positions include 327–335 (IGEGSTGIV), lysine 350, and 396–398 (EFL). The Proton acceptor role is filled by aspartate 440. 458 to 460 (DFG) is an ATP binding site. Phosphoserine; by autocatalysis is present on serine 474.

This sequence belongs to the protein kinase superfamily. STE Ser/Thr protein kinase family. STE20 subfamily. Interacts with FGFR2 and GRB2. Interacts tightly with GTP-bound but not GDP-bound CDC42/p21 and weakly with RAC1. Interacts with INKA1. Interacts with SH3RF2. Interacts with RHOU and PAXI; the PAK4-RHOU complex protects RHOU from ubiquitination and acts as a scaffold to suppport paxillin/PAXI phosphorylation. Post-translationally, autophosphorylated on serine residues when activated by CDC42/p21. Phosphorylated on tyrosine residues upon stimulation of FGFR2. Methylated by SETD6. Polyubiquitinated, leading to its proteasomal degradation. In terms of tissue distribution, highest expression in prostate, testis and colon.

It localises to the cytoplasm. The catalysed reaction is L-seryl-[protein] + ATP = O-phospho-L-seryl-[protein] + ADP + H(+). It carries out the reaction L-threonyl-[protein] + ATP = O-phospho-L-threonyl-[protein] + ADP + H(+). Its activity is regulated as follows. Inhibited by INKA1; which inhibits the serine/threonine-protein kinase activity by binding PAK4 in a substrate-like manner. In terms of biological role, serine/threonine-protein kinase that plays a role in a variety of different signaling pathways including cytoskeleton regulation, cell adhesion turnover, cell migration, growth, proliferation or cell survival. Activation by various effectors including growth factor receptors or active CDC42 and RAC1 results in a conformational change and a subsequent autophosphorylation on several serine and/or threonine residues. Phosphorylates and inactivates the protein phosphatase SSH1, leading to increased inhibitory phosphorylation of the actin binding/depolymerizing factor cofilin. Decreased cofilin activity may lead to stabilization of actin filaments. Phosphorylates LIMK1, a kinase that also inhibits the activity of cofilin. Phosphorylates integrin beta5/ITGB5 and thus regulates cell motility. Phosphorylates ARHGEF2 and activates the downstream target RHOA that plays a role in the regulation of assembly of focal adhesions and actin stress fibers. Stimulates cell survival by phosphorylating the BCL2 antagonist of cell death BAD. Alternatively, inhibits apoptosis by preventing caspase-8 binding to death domain receptors in a kinase independent manner. Plays a role in cell-cycle progression by controlling levels of the cell-cycle regulatory protein CDKN1A and by phosphorylating RAN. Promotes kinase-independent stabilization of RHOU, thereby contributing to focal adhesion disassembly during cell migration. The polypeptide is Serine/threonine-protein kinase PAK 4 (Homo sapiens (Human)).